The following is a 152-amino-acid chain: Endoribonuclease YbeY (152 aa).

3 residues coordinate Zn(2+): histidine 113, histidine 117, and histidine 123.

This sequence belongs to the endoribonuclease YbeY family. Zn(2+) serves as cofactor.

The protein resides in the cytoplasm. In terms of biological role, single strand-specific metallo-endoribonuclease involved in late-stage 70S ribosome quality control and in maturation of the 3' terminus of the 16S rRNA. This Acidovorax ebreus (strain TPSY) (Diaphorobacter sp. (strain TPSY)) protein is Endoribonuclease YbeY.